The primary structure comprises 895 residues: Alanine--tRNA ligase (895 aa).

Positions 577, 581, 680, and 684 each coordinate Zn(2+).

This sequence belongs to the class-II aminoacyl-tRNA synthetase family. It depends on Zn(2+) as a cofactor.

The protein resides in the cytoplasm. It catalyses the reaction tRNA(Ala) + L-alanine + ATP = L-alanyl-tRNA(Ala) + AMP + diphosphate. In terms of biological role, catalyzes the attachment of alanine to tRNA(Ala) in a two-step reaction: alanine is first activated by ATP to form Ala-AMP and then transferred to the acceptor end of tRNA(Ala). Also edits incorrectly charged Ser-tRNA(Ala) and Gly-tRNA(Ala) via its editing domain. The chain is Alanine--tRNA ligase from Kocuria rhizophila (strain ATCC 9341 / DSM 348 / NBRC 103217 / DC2201).